A 515-amino-acid polypeptide reads, in one-letter code: Glucose-6-phosphate 1-dehydrogenase 6, cytoplasmic (515 aa).

Residues 38-45, arginine 73, tyrosine 155, and lysine 182 each bind NADP(+); that span reads GASGDLAK. D-glucose 6-phosphate is bound by residues lysine 182, 212–216, glutamate 250, and aspartate 269; that span reads HYLGK. The Proton acceptor role is filled by histidine 274. Lysine 357 contributes to the NADP(+) binding site. Residues lysine 360 and arginine 365 each coordinate D-glucose 6-phosphate. 3 residues coordinate NADP(+): lysine 366, arginine 370, and arginine 394. Glutamine 396 is a binding site for D-glucose 6-phosphate. NADP(+)-binding positions include 402 to 404, 422 to 424, arginine 488, and tryptophan 510; these read YMK and DLS.

It belongs to the glucose-6-phosphate dehydrogenase family. As to quaternary structure, forms homodimer. Expressed in roots, leaves, stems, buds, flowers and siliques.

Its subcellular location is the cytoplasm. It localises to the cytosol. The enzyme catalyses D-glucose 6-phosphate + NADP(+) = 6-phospho-D-glucono-1,5-lactone + NADPH + H(+). The protein operates within carbohydrate degradation; pentose phosphate pathway; D-ribulose 5-phosphate from D-glucose 6-phosphate (oxidative stage): step 1/3. With respect to regulation, regulated by metabolites. Catalyzes the rate-limiting step of the oxidative pentose-phosphate pathway, which represents a route for the dissimilation of carbohydrates besides glycolysis. The main function of this enzyme is to provide reducing power (NADPH) and pentose phosphates for fatty acid and nucleic acid synthesis which are involved in membrane synthesis and cell division. The chain is Glucose-6-phosphate 1-dehydrogenase 6, cytoplasmic from Arabidopsis thaliana (Mouse-ear cress).